Here is a 275-residue protein sequence, read N- to C-terminus: Energy-coupling factor transporter ATP-binding protein EcfA1 (275 aa).

An ABC transporter domain is found at Ile-5–Asp-240. Gly-40–Ser-47 contributes to the ATP binding site.

This sequence belongs to the ABC transporter superfamily. Energy-coupling factor EcfA family. In terms of assembly, forms a stable energy-coupling factor (ECF) transporter complex composed of 2 membrane-embedded substrate-binding proteins (S component), 2 ATP-binding proteins (A component) and 2 transmembrane proteins (T component).

It is found in the cell membrane. Its function is as follows. ATP-binding (A) component of a common energy-coupling factor (ECF) ABC-transporter complex. Unlike classic ABC transporters this ECF transporter provides the energy necessary to transport a number of different substrates. This Streptococcus pneumoniae serotype 4 (strain ATCC BAA-334 / TIGR4) protein is Energy-coupling factor transporter ATP-binding protein EcfA1.